The following is a 189-amino-acid chain: Dual specificity phosphatase 29 (189 aa).

Positions His-33–Glu-182 constitute a Tyrosine-protein phosphatase domain. His-126–Arg-133 contacts substrate. Residue Cys-127 is the Phosphocysteine intermediate of the active site.

This sequence belongs to the protein-tyrosine phosphatase family. Non-receptor class dual specificity subfamily.

The protein localises to the cytoplasm. The protein resides in the nucleus. The enzyme catalyses O-phospho-L-tyrosyl-[protein] + H2O = L-tyrosyl-[protein] + phosphate. The catalysed reaction is O-phospho-L-seryl-[protein] + H2O = L-seryl-[protein] + phosphate. It carries out the reaction O-phospho-L-threonyl-[protein] + H2O = L-threonyl-[protein] + phosphate. Its function is as follows. Dual specificity phosphatase able to dephosphorylate phosphotyrosine, phosphoserine and phosphothreonine residues within the same substrate, with a preference for phosphotyrosine as a substrate. Involved in the modulation of AMPK and MAPK1/2 signaling pathways. The protein is Dual specificity phosphatase 29 (dusp29) of Danio rerio (Zebrafish).